We begin with the raw amino-acid sequence, 708 residues long: Capsid scaffolding protein (708 aa).

Residues His63, Ser132, and His157 each act as charge relay system in the active site. Disordered regions lie at residues 270-339, 455-565, and 593-620; these read SAER…MSHP, HPSY…QQQR, and ALPS…GGGE. A compositionally biased stretch (low complexity) spans 284–293; the sequence is PAAGARVPSS. Residues 294 to 311 show a composition bias toward pro residues; it reads SPSPPVEPPSPVQPPALP. A compositionally biased stretch (low complexity) spans 326–339; sequence SPSEPAEAASMSHP. The interaction with pAP stretch occupies residues 333-352; that stretch reads AASMSHPLSAAVPAATAPPG. Residues 498 to 513 are compositionally biased toward basic residues; it reads KQHRHGGSGGHNKRRK. 2 consecutive short sequence motifs (nuclear localization signal) follow at residues 510–515 and 537–543; these read KRRKET and RARKRLK. Residues 593–615 are compositionally biased toward low complexity; the sequence is ALPSAASSSPTTTTVCTPTSELT. The interval 688–708 is interaction with major capsid protein; that stretch reads PPKDMVDLNRRIFVAALNKLE.

The protein belongs to the herpesviridae capsid scaffolding protein family. In terms of assembly, homomultimer. Interacts with major capsid protein. Exists in a monomer-dimer equilibrium with the dimer being the active species. Post-translationally, capsid scaffolding protein is cleaved by assemblin after formation of the spherical procapsid. As a result, the capsid obtains its mature, icosahedral shape. Cleavages occur at two or more sites: release (R-site) and maturation (M-site).

The protein resides in the host cytoplasm. The protein localises to the host nucleus. It carries out the reaction Cleaves -Ala-|-Ser- and -Ala-|-Ala- bonds in the scaffold protein.. Functionally, acts as a scaffold protein by binding major capsid protein in the cytoplasm, inducing the nuclear localization of both proteins. Multimerizes in the nucleus such as major capsid protein forms the icosahedral T=16 capsid. Autocatalytic cleavage releases the assembly protein, and subsequently abolishes interaction with major capsid protein. Cleavages products are evicted from the capsid before or during DNA packaging. Its function is as follows. Protease that plays an essential role in virion assembly within the nucleus. Catalyzes the cleavage of the assembly protein after formation of the spherical procapsid. By that cleavage, the capsid matures and gains its icosahedral shape. The cleavage sites seem to include -Ala-Ser-, -Ala-Ala-, as well as Ala-Thr bonds. Assemblin and cleavages products are evicted from the capsid before or during DNA packaging. In terms of biological role, plays a major role in capsid assembly. Acts as a scaffold protein by binding major capsid protein. Multimerizes in the nucleus such as major capsid protein forms the icosahedral T=16 capsid. Cleaved by assemblin after capsid completion. The cleavages products are evicted from the capsid before or during DNA packaging. This Homo sapiens (Human) protein is Capsid scaffolding protein (UL80).